Consider the following 380-residue polypeptide: Cytochrome b (380 aa).

The next 4 membrane-spanning stretches (helical) occupy residues 33–53 (FGSL…FLAM), 77–98 (WLIR…YLHI), 113–133 (WTIG…GYVL), and 178–198 (FFAF…IHLL). Heme b is bound by residues His-83 and His-97. Positions 182 and 196 each coordinate heme b. Residue His-201 participates in a ubiquinone binding. Helical transmembrane passes span 226-246 (YKDL…ALFS), 288-308 (LGGV…PFLH), 320-340 (VTQF…WIGG), and 347-367 (FVII…VLIP).

The protein belongs to the cytochrome b family. In terms of assembly, the cytochrome bc1 complex contains 3 respiratory subunits (MT-CYB, CYC1 and UQCRFS1), 2 core proteins (UQCRC1 and UQCRC2) and probably 6 low-molecular weight proteins. Heme b serves as cofactor.

It localises to the mitochondrion inner membrane. Component of the ubiquinol-cytochrome c reductase complex (complex III or cytochrome b-c1 complex) that is part of the mitochondrial respiratory chain. The b-c1 complex mediates electron transfer from ubiquinol to cytochrome c. Contributes to the generation of a proton gradient across the mitochondrial membrane that is then used for ATP synthesis. The polypeptide is Cytochrome b (mt-cyb) (Kareius bicoloratus (Stone flounder)).